The following is a 466-amino-acid chain: ATP synthase subunit beta (466 aa).

Residue 153–160 (GGAGVGKT) coordinates ATP.

This sequence belongs to the ATPase alpha/beta chains family. F-type ATPases have 2 components, CF(1) - the catalytic core - and CF(0) - the membrane proton channel. CF(1) has five subunits: alpha(3), beta(3), gamma(1), delta(1), epsilon(1). CF(0) has three main subunits: a(1), b(2) and c(9-12). The alpha and beta chains form an alternating ring which encloses part of the gamma chain. CF(1) is attached to CF(0) by a central stalk formed by the gamma and epsilon chains, while a peripheral stalk is formed by the delta and b chains.

The protein resides in the cell membrane. The catalysed reaction is ATP + H2O + 4 H(+)(in) = ADP + phosphate + 5 H(+)(out). Functionally, produces ATP from ADP in the presence of a proton gradient across the membrane. The catalytic sites are hosted primarily by the beta subunits. This is ATP synthase subunit beta from Clostridium acetobutylicum (strain ATCC 824 / DSM 792 / JCM 1419 / IAM 19013 / LMG 5710 / NBRC 13948 / NRRL B-527 / VKM B-1787 / 2291 / W).